The following is a 333-amino-acid chain: Probable cytosolic iron-sulfur protein assembly protein ciao1-B (333 aa).

WD repeat units lie at residues 14–53 (HPDS…WECK), 59–98 (GHQR…FECL), 103–142 (GHEN…EYEC), 148–187 (SHTQ…WECR), 192–231 (GHTS…GGQE), 246–285 (FHGR…DPDQ), and 297–333 (AHTQ…QSGV).

It belongs to the WD repeat CIA1 family. Component of the CIA complex.

Its function is as follows. Key component of the cytosolic iron-sulfur protein assembly (CIA) complex, a multiprotein complex that mediates the incorporation of iron-sulfur cluster into extramitochondrial Fe/S proteins. The protein is Probable cytosolic iron-sulfur protein assembly protein ciao1-B (ciao1b) of Salmo salar (Atlantic salmon).